The sequence spans 218 residues: Deoxyribose-phosphate aldolase (218 aa).

Asp-89 functions as the Proton donor/acceptor in the catalytic mechanism. Lys-152 serves as the catalytic Schiff-base intermediate with acetaldehyde. The active-site Proton donor/acceptor is Lys-182.

The protein belongs to the DeoC/FbaB aldolase family. DeoC type 1 subfamily.

Its subcellular location is the cytoplasm. It catalyses the reaction 2-deoxy-D-ribose 5-phosphate = D-glyceraldehyde 3-phosphate + acetaldehyde. The protein operates within carbohydrate degradation; 2-deoxy-D-ribose 1-phosphate degradation; D-glyceraldehyde 3-phosphate and acetaldehyde from 2-deoxy-alpha-D-ribose 1-phosphate: step 2/2. Its function is as follows. Catalyzes a reversible aldol reaction between acetaldehyde and D-glyceraldehyde 3-phosphate to generate 2-deoxy-D-ribose 5-phosphate. The chain is Deoxyribose-phosphate aldolase from Kocuria rhizophila (strain ATCC 9341 / DSM 348 / NBRC 103217 / DC2201).